Consider the following 291-residue polypeptide: Signal peptidase I (291 aa).

Over 1-45 the chain is Cytoplasmic; it reads MTMKKLTSTTTTLWDNKLFINNLKNFMQTNTESNNNKTTAQEWKS. Residues 46 to 66 traverse the membrane as a helical segment; that stretch reads FILVVVIALMIRILIIESFVV. Residues 67 to 291 lie on the Periplasmic side of the membrane; that stretch reads PTGSMKATIL…IFRNLYSIED (225 aa). Active-site residues include S70 and K133.

The protein belongs to the peptidase S26 family.

It localises to the cell inner membrane. The enzyme catalyses Cleavage of hydrophobic, N-terminal signal or leader sequences from secreted and periplasmic proteins.. The polypeptide is Signal peptidase I (lepB) (Rickettsia bellii (strain RML369-C)).